The chain runs to 189 residues: GTPase NRas (189 aa).

10 to 17 (GAGGVGKS) is a binding site for GTP. Positions 32 to 40 (YDPTIEDSY) match the Effector region motif. Residues 57-61 (DTAGQ) and 116-119 (NKCD) contribute to the GTP site. Residues 166–185 (YRMKKLDSSEDNNQGCIRIP) form a hypervariable region region. C181 is lipidated: S-palmitoyl cysteine. C186 carries S-farnesyl cysteine lipidation. The propeptide at 187 to 189 (KLM) is removed in mature form.

Belongs to the small GTPase superfamily. Ras family. Palmitoylated by the ZDHHC9-GOLGA7 complex. Depalmitoylated by abhd17a, abhd17b and abhd17c. A continuous cycle of de- and re-palmitoylation regulates rapid exchange between plasma membrane and Golgi.

The protein localises to the cell membrane. Its subcellular location is the golgi apparatus membrane. The enzyme catalyses GTP + H2O = GDP + phosphate + H(+). Alternates between an inactive form bound to GDP and an active form bound to GTP. Activated by a guanine nucleotide-exchange factor (GEF) and inactivated by a GTPase-activating protein (GAP). Functionally, ras proteins bind GDP/GTP and possess intrinsic GTPase activity. The protein is GTPase NRas (nras) of Xenopus laevis (African clawed frog).